The chain runs to 35 residues: Photosystem II reaction center protein T (35 aa).

A helical transmembrane segment spans residues 3–23; sequence ALVYTFLLVSTLGIIFFAIFF.

This sequence belongs to the PsbT family. PSII is composed of 1 copy each of membrane proteins PsbA, PsbB, PsbC, PsbD, PsbE, PsbF, PsbH, PsbI, PsbJ, PsbK, PsbL, PsbM, PsbT, PsbY, PsbZ, Psb30/Ycf12, at least 3 peripheral proteins of the oxygen-evolving complex and a large number of cofactors. It forms dimeric complexes.

The protein resides in the plastid. The protein localises to the chloroplast thylakoid membrane. Functionally, found at the monomer-monomer interface of the photosystem II (PS II) dimer, plays a role in assembly and dimerization of PSII. PSII is a light-driven water plastoquinone oxidoreductase, using light energy to abstract electrons from H(2)O, generating a proton gradient subsequently used for ATP formation. The chain is Photosystem II reaction center protein T from Oenothera argillicola (Appalachian evening primrose).